Reading from the N-terminus, the 639-residue chain is Transcription factor phomR' (639 aa).

Positions 14-41 (CWTCRLRRKKCNEGGPPCDNCEARGIHC) form a DNA-binding region, zn(2)-C6 fungal-type. 2 disordered regions span residues 58–136 (REEA…AGTG) and 476–499 (LPRS…TGPE). Residues 68 to 108 (SGRGRSYSRSSSTAAAAAPKPAEGAMVTGGSSSSSRGSGSS) show a composition bias toward low complexity.

The protein localises to the nucleus. Transcription factor; part of the gene cluster that mediates the biosynthesis of the phomopsins, a group of hexapeptide mycotoxins which infects lupins and causes lupinosis disease in livestock. May play a role in the regulation of the production of phomopsins. The polypeptide is Transcription factor phomR' (Diaporthe leptostromiformis (Lupinosis disease fungus)).